Reading from the N-terminus, the 174-residue chain is Alpha-crystallin B chain (174 aa).

Met1 bears the N-acetylmethionine mark. A sHSP domain is found at 55-163 (RMPSWLETGL…PERSIPITRE (109 aa)). The Zn(2+) site is built by His82, His103, Glu105, and His110. Residues 148-174 (RKQSDVPERSIPITREEKPAIAGSQRK) are disordered. A compositionally biased stretch (basic and acidic residues) spans 149-166 (KQSDVPERSIPITREEKP).

Belongs to the small heat shock protein (HSP20) family. Heteromer composed of three CRYAA and one CRYAB subunits. Aggregates with homologous proteins, including the small heat shock protein HSPB1, to form large heteromeric complexes. Inter-subunit bridging via zinc ions enhances stability, which is crucial as there is no protein turn over in the lens. Lens as well as other tissues.

In terms of biological role, may contribute to the transparency and refractive index of the lens. The chain is Alpha-crystallin B chain (CRYAB) from Gallus gallus (Chicken).